A 90-amino-acid chain; its full sequence is Probable Fe(2+)-trafficking protein (90 aa).

The protein belongs to the Fe(2+)-trafficking protein family.

Functionally, could be a mediator in iron transactions between iron acquisition and iron-requiring processes, such as synthesis and/or repair of Fe-S clusters in biosynthetic enzymes. This is Probable Fe(2+)-trafficking protein from Coxiella burnetii (strain CbuG_Q212) (Coxiella burnetii (strain Q212)).